A 133-amino-acid chain; its full sequence is Ribonuclease P protein component (133 aa).

The protein belongs to the RnpA family. As to quaternary structure, consists of a catalytic RNA component (M1 or rnpB) and a protein subunit.

It catalyses the reaction Endonucleolytic cleavage of RNA, removing 5'-extranucleotides from tRNA precursor.. RNaseP catalyzes the removal of the 5'-leader sequence from pre-tRNA to produce the mature 5'-terminus. It can also cleave other RNA substrates such as 4.5S RNA. The protein component plays an auxiliary but essential role in vivo by binding to the 5'-leader sequence and broadening the substrate specificity of the ribozyme. This is Ribonuclease P protein component from Bartonella quintana (strain Toulouse) (Rochalimaea quintana).